The primary structure comprises 218 residues: Small ribosomal subunit protein uS3c (218 aa).

The 80-residue stretch at 39–118 (IRNFIKNYVQ…KLNIAITRIA (80 aa)) folds into the KH type-2 domain.

This sequence belongs to the universal ribosomal protein uS3 family. Part of the 30S ribosomal subunit.

It localises to the plastid. The protein localises to the chloroplast. In Ipomoea purpurea (Common morning glory), this protein is Small ribosomal subunit protein uS3c (rps3).